A 125-amino-acid chain; its full sequence is Holo-[acyl-carrier-protein] synthase (125 aa).

Mg(2+) is bound by residues Asp-8 and Glu-57.

It belongs to the P-Pant transferase superfamily. AcpS family. Requires Mg(2+) as cofactor.

The protein resides in the cytoplasm. The enzyme catalyses apo-[ACP] + CoA = holo-[ACP] + adenosine 3',5'-bisphosphate + H(+). Transfers the 4'-phosphopantetheine moiety from coenzyme A to a Ser of acyl-carrier-protein. This Natranaerobius thermophilus (strain ATCC BAA-1301 / DSM 18059 / JW/NM-WN-LF) protein is Holo-[acyl-carrier-protein] synthase.